We begin with the raw amino-acid sequence, 509 residues long: Flotillin-like protein FloT (509 aa).

The Cytoplasmic portion of the chain corresponds to Met1–Met3. An intramembrane segment occupies Pro4–Ile24. Over Thr25–Glu509 the chain is Cytoplasmic. Residues Ala119 to Glu301 form a PHB domain region. The segment at Arg203–Glu509 is required for correct localization. 4 short sequence motifs (EA repeat) span residues Ala342–Ala344, Ala357–Glu360, Ala370–Glu373, and Ala390–Ala394. The interval Lys485–Glu509 is not required for correct localization.

It belongs to the band 7/mec-2 family. Flotillin subfamily. In terms of assembly, homooligomerizes. Oligomerizes in very large complexes in vitro. Interacts with FloA, FtsH, FtsX, OppA, SdhA and SecY in detergent-resistant membrane (DRM) fractions. Interacts with FtsH at midcell. Interacts with FloA. Interacts in vivo with KinC, FloA, FtsH and ResE. Interacts with ResE, colocalizes with ResE in FloT-only membrane rafts. Another study shows nearly complete colocalization with NfeD2, but only minor colocalization with FtsH or KinC.

Its subcellular location is the cell membrane. The protein resides in the membrane raft. Functionally, found in functional membrane microdomains (FMM) that may be equivalent to eukaryotic membrane rafts. FMMs are highly dynamic and increase in number as cells age. FloA and FloT function is partially redundant; double deletions have marked synthetic phenotypes. Flotillins are thought to be important factors in membrane fluidity, especially during periods of rapid growth in rich media. Whether specific proteins are associated with FMMs is controversial; in one study FloT rafts have been shown to include proteins involved in adaptation to stationary phase, while FloA-FloT rafts include proteins involved in differentiation including sporulation, biofilm formation and DNA uptake competence. Another (more finely resolved) study only showed association of NfeD2 with FloT rafts of all the proteins examined. Aids homooligomerization of KinC and KinD but not KinB, may prevent incorrect hetero-association of the above kinases. Simultaneous overexpression of both FloA and FloT leads to defects in cell division and differentiation, in part caused by stabilization of FtsH and its subsequent increased ability to degrade proteins. Cells make more biofilm, are about half as long, have less EzrA and more frequent Z-rings. Involved in spatial organization of membranes, perhaps recruiting proteins (e.g. NfeD2) to specific membrane regions. Plays a role in phosphorylation of master regulator Spo0A, an early sporulation event. Plays a non-redundant role with dynamin-like protein A (dynA) in membrane dynamics and cell shape. This Bacillus subtilis (strain 168) protein is Flotillin-like protein FloT.